We begin with the raw amino-acid sequence, 339 residues long: Bifunctional NMN adenylyltransferase/Nudix hydrolase (339 aa).

Residues 1–183 (MQTKYQYGIY…RYIALCDEYQ (183 aa)) form an NMN adenylyltransferase region. The Nudix hydrolase domain occupies 199-335 (PTFITTDAVV…EDHFQIIQHF (137 aa)). A Nudix box motif is present at residues 233-254 (GFIKQNETLVEGMLRELKEETR).

It in the N-terminal section; belongs to the archaeal NMN adenylyltransferase family. Mg(2+) serves as cofactor. Mn(2+) is required as a cofactor.

It is found in the cytoplasm. It catalyses the reaction beta-nicotinamide D-ribonucleotide + ATP + H(+) = diphosphate + NAD(+). It functions in the pathway cofactor biosynthesis; NAD(+) biosynthesis; NAD(+) from nicotinamide D-ribonucleotide: step 1/1. In terms of biological role, the Nudix hydrolase domain is active on ADP-ribose, (2')-phospho-ADP-ribose, IDP-ribose and NADPH. This chain is Bifunctional NMN adenylyltransferase/Nudix hydrolase, found in Synechocystis sp. (strain ATCC 27184 / PCC 6803 / Kazusa).